Consider the following 113-residue polypeptide: uncharacterized protein (113 aa).

Residues 4 to 26 (VLFKIAVALLYLLSFFLHRLHLR) traverse the membrane as a helical segment. Positions 32–74 (RRRRRRHHRRHHRRHHHHRRRRRRRRRRRRRHHRHHHHRHRRR) are disordered.

It localises to the membrane. This is an uncharacterized protein from Saccharomyces cerevisiae (strain ATCC 204508 / S288c) (Baker's yeast).